The following is a 571-amino-acid chain: Quinone-dependent D-lactate dehydrogenase (571 aa).

The FAD-binding PCMH-type domain maps to 42–213; the sequence is GQGDALAVVF…SKLDDDRIKD (172 aa). FAD is bound by residues 76–80, 84–85, glycine 143, serine 150, glycine 160, and valine 262; these read AANTG and GS. The disordered stretch occupies residues 546–571; it reads RENDPTNSMNPGIGKTSKRKNWQEVE.

It belongs to the quinone-dependent D-lactate dehydrogenase family. It depends on FAD as a cofactor.

It is found in the cell inner membrane. The catalysed reaction is (R)-lactate + a quinone = a quinol + pyruvate. With respect to regulation, inhibited by 2-hydroxy-3-butynoic acid, but not by p-chloromercuribenzoate, n-ethylmaleimide, or 5,5'-dithiobis(2-nitrobenzoic acid). Functionally, catalyzes the oxidation of D-lactate to pyruvate. Electrons derived from D-lactate oxidation are transferred to the ubiquinone/cytochrome electron transfer chain, where they may be used to provide energy for the active transport of a variety of amino acids and sugars across the membrane. In Escherichia coli (strain K12), this protein is Quinone-dependent D-lactate dehydrogenase.